Reading from the N-terminus, the 438-residue chain is Glutamine synthetase (438 aa).

In terms of domain architecture, GS beta-grasp spans 14 to 98 (EEVEYVDIRF…VHCNVVEPDT (85 aa)). The GS catalytic domain occupies 106–438 (PRIALKAEAY…LAGDVFTKDQ (333 aa)). Positions 130 and 132 each coordinate Mg(2+). Asp-208 is an ATP binding site. Mg(2+) is bound by residues Glu-213 and Glu-220. L-glutamate-binding positions include 264 to 265 (NG) and Gly-265. Position 269 (His-269) interacts with Mg(2+). ATP-binding positions include 271–273 (NMS) and Ser-273. L-glutamate contacts are provided by Arg-321, Glu-327, and Arg-339. Residues Arg-339, Arg-344, and Lys-352 each coordinate ATP. Mg(2+) is bound at residue Glu-357. Residue Arg-359 coordinates L-glutamate. Tyr-397 bears the O-AMP-tyrosine mark.

Belongs to the glutamine synthetase family. As to quaternary structure, oligomer of 12 subunits arranged in the form of two hexameric ring. Mg(2+) serves as cofactor.

The protein resides in the cytoplasm. The enzyme catalyses L-glutamate + NH4(+) + ATP = L-glutamine + ADP + phosphate + H(+). With respect to regulation, the activity of this enzyme could be controlled by adenylation under conditions of abundant glutamine. Functionally, catalyzes the ATP-dependent biosynthesis of glutamine from glutamate and ammonia. In Rhodobacter capsulatus (Rhodopseudomonas capsulata), this protein is Glutamine synthetase.